A 477-amino-acid polypeptide reads, in one-letter code: Trigger factor (477 aa).

The PPIase FKBP-type domain maps to 163–248 (ENLVIFDYKA…ITEVKKSEEV (86 aa)). The segment covering 408-461 (KAKPSKKEISKEEAEKILKEHQKQDHNHEHDHNHDHDHPEEKKASKSTKIEKKP) has biased composition (basic and acidic residues). Residues 408–477 (KAKPSKKEIS…KPSTKKVSKK (70 aa)) are disordered.

Belongs to the FKBP-type PPIase family. Tig subfamily.

It is found in the cytoplasm. The catalysed reaction is [protein]-peptidylproline (omega=180) = [protein]-peptidylproline (omega=0). Functionally, involved in protein export. Acts as a chaperone by maintaining the newly synthesized protein in an open conformation. Functions as a peptidyl-prolyl cis-trans isomerase. In Pelagibacter ubique (strain HTCC1062), this protein is Trigger factor.